A 305-amino-acid chain; its full sequence is Olfactory receptor 4F17 (305 aa).

Topologically, residues 1–18 are extracellular; that stretch reads MVTEFIFLGLSDSQGLQT. The chain crosses the membrane as a helical span at residues 19–42; that stretch reads FLFMLFFVFYGGIVFGNLLIVITV. The Cytoplasmic segment spans residues 43 to 50; it reads VSDSHLHS. Residues 51–72 form a helical membrane-spanning segment; that stretch reads PMYFLLANLSLIDLSLSSVTAP. The Extracellular portion of the chain corresponds to 73–93; that stretch reads KMITDFFSQRKVISFKGCLVQ. The cysteines at positions 90 and 182 are disulfide-linked. Residues 94 to 113 traverse the membrane as a helical segment; the sequence is IFLLHFFGGSEMVILIAMGF. At 114-132 the chain is on the cytoplasmic side; the sequence is DRYIAICKPLHYTTIMCGN. Residues 133-151 traverse the membrane as a helical segment; the sequence is ACVGIMAVAWGIGFLHSVS. The Extracellular portion of the chain corresponds to 152–188; the sequence is QLAFAVHLPFCGPNEVDSFYCDLPRVIKLACTDTYRL. A helical membrane pass occupies residues 189–212; the sequence is DIMVIANSGVLTVCSFVLLIISYT. At 213–228 the chain is on the cytoplasmic side; it reads IILMTIQHRPLDKSSK. A helical transmembrane segment spans residues 229 to 251; that stretch reads ALSTLTAHITVVLLFFGPCVFIY. At 252–262 the chain is on the extracellular side; the sequence is AWPFPIKSLDK. A helical membrane pass occupies residues 263 to 282; it reads FLAVFYSVITPLLNPIIYTL. At 283 to 305 the chain is on the cytoplasmic side; the sequence is RNKDMKTAIRQLRKWDAHSSVKF.

Belongs to the G-protein coupled receptor 1 family.

The protein resides in the cell membrane. Odorant receptor. This Homo sapiens (Human) protein is Olfactory receptor 4F17 (OR4F17).